The sequence spans 339 residues: Cyclic AMP-dependent transcription factor ATF-4 (339 aa).

Disordered regions lie at residues 14-62 (GPWP…PSEL), 153-182 (PEEIKSEPLSPAPSVPSPPEEAPQDEHTEV), and 209-313 (QNIS…EKAD). Residues 35-55 (VLEGSWSPSSSSLSSFSPPAS) show a composition bias toward low complexity. Residues 162–173 (SPAPSVPSPPEE) are compositionally biased toward pro residues. The segment covering 211–226 (ISDCSDSDSGISVSGS) has biased composition (low complexity). Basic and acidic residues predominate over residues 231–247 (SDLEPSSRAKPYSRPDP). Residues 266 to 329 (VEKKLKKMEQ…QYLRDLLEEM (64 aa)) form the bZIP domain. The interval 268 to 288 (KKLKKMEQNKTAATRYRQKKR) is basic motif. The segment at 294-322 (LNSECSELEKKNRELSEKADSLSREIQYL) is leucine-zipper. Over residues 300-313 (ELEKKNRELSEKAD) the composition is skewed to basic and acidic residues.

Belongs to the bZIP family. Binds DNA as a homodimer and as a heterodimer.

It is found in the nucleus. In terms of biological role, transcription factor that binds the cAMP response element (CRE) (consensus: 5'-GTGACGT[AC][AG]-3') and displays two biological functions, as regulator of metabolic and redox processes under normal cellular conditions, and as master transcription factor during integrated stress response (ISR). Binds to asymmetric CRE's as a heterodimer and to palindromic CRE's as a homodimer. Core effector of the ISR, which is required for adaptation to various stress such as endoplasmic reticulum (ER) stress, amino acid starvation, mitochondrial stress or oxidative stress. During ISR, atf4 translation is induced via an alternative ribosome translation re-initiation mechanism in response to eif2s1/eIF-2-alpha phosphorylation, and stress-induced atf4 acts as a master transcription factor of stress-responsive genes in order to promote cell recovery. Promotes the transcription of genes linked to amino acid sufficiency and resistance to oxidative stress to protect cells against metabolic consequences of ER oxidation. In the absence of stress, atf4 translation is at low levels and it is required for normal metabolic processes such as embryonic lens formation, fetal liver hematopoiesis, bone development and synaptic plasticity. Acts as a regulator of osteoblast differentiation by promoting expression of osteoblast-specific genes. Regulates the circadian expression of the core clock components. Mainly acts as a transcriptional activator in cellular stress adaptation, but it can also act as a transcriptional repressor. In Danio rerio (Zebrafish), this protein is Cyclic AMP-dependent transcription factor ATF-4 (atf4).